The sequence spans 360 residues: mRNA cap guanine-N(7) methyltransferase (360 aa).

Residues 1 to 62 form a disordered region; it reads MSSSNSRVHE…NRHENNGNAQ (62 aa). A compositionally biased stretch (basic and acidic residues) spans 7–19; the sequence is RVHEEQPPTENRR. The mRNA cap 0 methyltransferase domain occupies 83 to 358; that stretch reads SPIIQLKRFN…FYLAFAFEKR (276 aa). Position 92–93 (92–93) interacts with mRNA; sequence NN. S-adenosyl-L-methionine is bound by residues K96, G118, D140, D168, Q191, and Y196.

This sequence belongs to the class I-like SAM-binding methyltransferase superfamily. mRNA cap 0 methyltransferase family. Interacts with cdk9.

Its subcellular location is the nucleus. It catalyses the reaction a 5'-end (5'-triphosphoguanosine)-ribonucleoside in mRNA + S-adenosyl-L-methionine = a 5'-end (N(7)-methyl 5'-triphosphoguanosine)-ribonucleoside in mRNA + S-adenosyl-L-homocysteine. Responsible for methylating the 5'-cap structure of mRNAs. This Schizosaccharomyces pombe (strain 972 / ATCC 24843) (Fission yeast) protein is mRNA cap guanine-N(7) methyltransferase (pcm1).